The chain runs to 155 residues: 6,7-dimethyl-8-ribityllumazine synthase (155 aa).

5-amino-6-(D-ribitylamino)uracil contacts are provided by residues F24, 58–60 (AFE), and 82–84 (VII). 87–88 (ST) contributes to the (2S)-2-hydroxy-3-oxobutyl phosphate binding site. Catalysis depends on H90, which acts as the Proton donor. Residue F115 participates in 5-amino-6-(D-ribitylamino)uracil binding. R129 is a binding site for (2S)-2-hydroxy-3-oxobutyl phosphate.

It belongs to the DMRL synthase family.

It catalyses the reaction (2S)-2-hydroxy-3-oxobutyl phosphate + 5-amino-6-(D-ribitylamino)uracil = 6,7-dimethyl-8-(1-D-ribityl)lumazine + phosphate + 2 H2O + H(+). Its pathway is cofactor biosynthesis; riboflavin biosynthesis; riboflavin from 2-hydroxy-3-oxobutyl phosphate and 5-amino-6-(D-ribitylamino)uracil: step 1/2. Functionally, catalyzes the formation of 6,7-dimethyl-8-ribityllumazine by condensation of 5-amino-6-(D-ribitylamino)uracil with 3,4-dihydroxy-2-butanone 4-phosphate. This is the penultimate step in the biosynthesis of riboflavin. This is 6,7-dimethyl-8-ribityllumazine synthase from Chlorobium chlorochromatii (strain CaD3).